We begin with the raw amino-acid sequence, 167 residues long: Bacterial non-heme ferritin (167 aa).

One can recognise a Ferritin-like diiron domain in the interval 2 to 145 (LNKELLDALN…THIDYLNRIG (144 aa)). Residues glutamate 17, glutamate 50, histidine 53, glutamate 94, and glutamine 127 each contribute to the Fe cation site.

This sequence belongs to the ferritin family. Prokaryotic subfamily.

It localises to the cytoplasm. The catalysed reaction is 4 Fe(2+) + O2 + 6 H2O = 4 iron(III) oxide-hydroxide + 12 H(+). In terms of biological role, iron-storage protein. The polypeptide is Bacterial non-heme ferritin (ftnA) (Staphylococcus saprophyticus subsp. saprophyticus (strain ATCC 15305 / DSM 20229 / NCIMB 8711 / NCTC 7292 / S-41)).